Consider the following 58-residue polypeptide: Large ribosomal subunit protein bL32 (58 aa).

Belongs to the bacterial ribosomal protein bL32 family.

The sequence is that of Large ribosomal subunit protein bL32 from Thermobifida fusca (strain YX).